We begin with the raw amino-acid sequence, 165 residues long: Transmembrane protein 128 (165 aa).

The next 4 helical transmembrane spans lie at 49–69 (NIHS…VDFF), 81–101 (WFLC…YCIV), 119–139 (LIPI…IALW), and 144–164 (FFTP…ITLL).

It is found in the membrane. This is Transmembrane protein 128 (TMEM128) from Homo sapiens (Human).